We begin with the raw amino-acid sequence, 229 residues long: uncharacterized protein (229 aa).

The segment at 61 to 229 (MQAEDKVSKP…TESEDKPKRG (169 aa)) is disordered. Over residues 109-128 (QQEKQQPEKAVVEQQEKQQP) the composition is skewed to basic and acidic residues. Low complexity predominate over residues 166–194 (QPEQPERQQQAQPERQQQAQPERQQQAQP). Over residues 195–204 (EEAEDAEQEP) the composition is skewed to acidic residues. Over residues 218-229 (TQTESEDKPKRG) the composition is skewed to basic and acidic residues.

This is an uncharacterized protein from Frog virus 3 (isolate Goorha) (FV-3).